Here is a 141-residue protein sequence, read N- to C-terminus: ATP synthase epsilon chain (141 aa).

It belongs to the ATPase epsilon chain family. In terms of assembly, F-type ATPases have 2 components, CF(1) - the catalytic core - and CF(0) - the membrane proton channel. CF(1) has five subunits: alpha(3), beta(3), gamma(1), delta(1), epsilon(1). CF(0) has three main subunits: a, b and c.

Its subcellular location is the cell inner membrane. Its function is as follows. Produces ATP from ADP in the presence of a proton gradient across the membrane. The polypeptide is ATP synthase epsilon chain (Bordetella petrii (strain ATCC BAA-461 / DSM 12804 / CCUG 43448)).